The sequence spans 360 residues: MKNIFLHSLSLENYRNFKNLELKTDNTPIILIGENGSGKTNILEAISLFYPGRGLRSAKLANVCKTSEDHCLVKALLQSKLGLAEFTTQFKRSSNRRITEYNESKIANNELSKFTSMVWLTPHMEGIFTSGSSDRRKFLDRIVYNFDPKHAELVSKYEYYMHERNKILVEDIRDDNWLKIIEEKMADISNHIANNRLKTLEFMQQAIDDLENEFPKADLSIDGIVEQKILNGKKNIVSFITAELYQTRSKDKLLGRTSFGVHKSDFLVKHQKKNILAKFCSTGEQKAILIAIILAEMNYAIKLTKIAPILLLDEVFVHLDDKRRQYLIEFLIGLNMQLWVTTTNLEGIENFATKAQLIKL.

33–40 (GENGSGKT) contacts ATP.

It belongs to the RecF family.

It localises to the cytoplasm. Functionally, the RecF protein is involved in DNA metabolism; it is required for DNA replication and normal SOS inducibility. RecF binds preferentially to single-stranded, linear DNA. It also seems to bind ATP. This is DNA replication and repair protein RecF from Rickettsia africae (strain ESF-5).